A 33-amino-acid chain; its full sequence is Alpha-amanitin proprotein 2 (33 aa).

A propeptide spanning residues M1–P10 is cleaved from the precursor. I11 is modified ((3R,4R)-4,5-dihydroxyisoleucine; in form alpha-amanitin). Residue I11 is modified to (3R,4S)-4-hydroxyisoleucine; in form gamma-amanitin. A cross-link (cyclopeptide (Ile-Pro)) is located at residues I11 to P18. Residues W12–C16 constitute a cross-link (2'-cysteinyl-6'-hydroxytryptophan sulfoxide (Trp-Cys)). P18 carries the post-translational modification 4-hydroxyproline. The propeptide occupies C19–A33.

Belongs to the MSDIN fungal toxin family. Post-translationally, processed by the macrocyclase-peptidase enzyme POPB to yield a toxic cyclic octapeptide. POPB first removes 10 residues from the N-terminus. Conformational trapping of the remaining peptide forces the enzyme to release this intermediate rather than proceed to macrocyclization. The enzyme rebinds the remaining peptide in a different conformation and catalyzes macrocyclization of the N-terminal 8 residues. Expressed in basidiocarps.

In terms of biological role, major toxin belonging to the bicyclic octapeptides amatoxins that acts by binding non-competitively to RNA polymerase II and greatly slowing the elongation of transcripts from target promoters. This is Alpha-amanitin proprotein 2 from Amanita exitialis (Guangzhou destroying angel).